The following is a 62-amino-acid chain: Photosystem II reaction center protein Z (62 aa).

The next 2 membrane-spanning stretches (helical) occupy residues Thr8–Ala28 and Phe41–Val61.

It belongs to the PsbZ family. In terms of assembly, PSII is composed of 1 copy each of membrane proteins PsbA, PsbB, PsbC, PsbD, PsbE, PsbF, PsbH, PsbI, PsbJ, PsbK, PsbL, PsbM, PsbT, PsbY, PsbZ, Psb30/Ycf12, at least 3 peripheral proteins of the oxygen-evolving complex and a large number of cofactors. It forms dimeric complexes.

The protein localises to the plastid. The protein resides in the chloroplast thylakoid membrane. Functionally, may control the interaction of photosystem II (PSII) cores with the light-harvesting antenna, regulates electron flow through the 2 photosystem reaction centers. PSII is a light-driven water plastoquinone oxidoreductase, using light energy to abstract electrons from H(2)O, generating a proton gradient subsequently used for ATP formation. In Mesostigma viride (Green alga), this protein is Photosystem II reaction center protein Z.